A 169-amino-acid polypeptide reads, in one-letter code: Large ribosomal subunit protein uL5 (169 aa).

It belongs to the universal ribosomal protein uL5 family. In terms of assembly, part of the 50S ribosomal subunit; contacts the 5S rRNA and probably tRNA. Forms a bridge to the 30S subunit in the 70S ribosome.

This is one of the proteins that bind and probably mediate the attachment of the 5S RNA into the large ribosomal subunit, where it forms part of the central protuberance. In the 70S ribosome it contacts protein S13 of the 30S subunit (bridge B1b), connecting the 2 subunits; this bridge is implicated in subunit movement. May contact the P site tRNA; the 5S rRNA and some of its associated proteins might help stabilize positioning of ribosome-bound tRNAs. In Methanococcoides burtonii (strain DSM 6242 / NBRC 107633 / OCM 468 / ACE-M), this protein is Large ribosomal subunit protein uL5.